Here is a 116-residue protein sequence, read N- to C-terminus: Large ribosomal subunit protein uL18 (116 aa).

This sequence belongs to the universal ribosomal protein uL18 family. As to quaternary structure, part of the 50S ribosomal subunit; part of the 5S rRNA/L5/L18/L25 subcomplex. Contacts the 5S and 23S rRNAs.

Its function is as follows. This is one of the proteins that bind and probably mediate the attachment of the 5S RNA into the large ribosomal subunit, where it forms part of the central protuberance. The sequence is that of Large ribosomal subunit protein uL18 from Shewanella piezotolerans (strain WP3 / JCM 13877).